Reading from the N-terminus, the 188-residue chain is Apolipoprotein M (188 aa).

Positions 1-22 (MFHQIWAALLYLYGILLNSIYQ) form a signal peptide, not cleaved. 3 disulfide bridges follow: cysteine 23-cysteine 167, cysteine 95-cysteine 183, and cysteine 128-cysteine 157. Tetradecanoate is bound by residues glutamate 136 and arginine 143.

Belongs to the calycin superfamily. Lipocalin family. Highly divergent. In terms of assembly, interacts with LRP2; LRP2 mediates APOM renal uptake and subsequent lysosomal degradation.

Its subcellular location is the secreted. Probably involved in lipid transport. Can bind sphingosine-1-phosphate, myristic acid, palmitic acid and stearic acid, retinol, all-trans-retinoic acid and 9-cis-retinoic acid. The protein is Apolipoprotein M (APOM) of Sus scrofa (Pig).